The chain runs to 112 residues: Dolichyl-diphosphooligosaccharide--protein glycosyltransferase subunit DAD1 (112 aa).

The Cytoplasmic segment spans residues 1–27; sequence MVELSSVISKFYNDYVQNTPKKLKLVD. A helical membrane pass occupies residues 28-48; sequence IYLGYILLTGIIQFVYCCLVG. At 49–51 the chain is on the lumenal side; sequence TFP. Residues 52-72 traverse the membrane as a helical segment; sequence FNSFLSGFISTVSCFVLAVCL. The Cytoplasmic segment spans residues 73–91; sequence RLQANPQNKSVFAGISPER. The chain crosses the membrane as a helical span at residues 92–112; sequence GFADFIFAHVILHLVVMNFIG.

This sequence belongs to the DAD/OST2 family. Component of the oligosaccharyltransferase (OST) complex.

The protein resides in the endoplasmic reticulum membrane. Its pathway is protein modification; protein glycosylation. In terms of biological role, subunit of the oligosaccharyl transferase (OST) complex that catalyzes the initial transfer of a defined glycan (Glc(3)Man(9)GlcNAc(2) in eukaryotes) from the lipid carrier dolichol-pyrophosphate to an asparagine residue within an Asn-X-Ser/Thr consensus motif in nascent polypeptide chains, the first step in protein N-glycosylation. N-glycosylation occurs cotranslationally and the complex associates with the Sec61 complex at the channel-forming translocon complex that mediates protein translocation across the endoplasmic reticulum (ER). All subunits are required for a maximal enzyme activity. Probably as part of the N-glycosylation pathway, plays a role in the regulation of tissue growth and apoptosis. The polypeptide is Dolichyl-diphosphooligosaccharide--protein glycosyltransferase subunit DAD1 (Drosophila melanogaster (Fruit fly)).